The chain runs to 166 residues: Small ribosomal subunit protein uS5 (166 aa).

An S5 DRBM domain is found at 11-74 (LIEKLVSVKR…ENAKKNMVSV (64 aa)).

Belongs to the universal ribosomal protein uS5 family. As to quaternary structure, part of the 30S ribosomal subunit. Contacts proteins S4 and S8.

With S4 and S12 plays an important role in translational accuracy. In terms of biological role, located at the back of the 30S subunit body where it stabilizes the conformation of the head with respect to the body. The protein is Small ribosomal subunit protein uS5 of Francisella tularensis subsp. holarctica (strain LVS).